The chain runs to 362 residues: Phosphoserine aminotransferase (362 aa).

Position 43 (Arg43) interacts with L-glutamate. Residues 77–78 (AS), Trp103, Thr153, Asp173, and Gln196 each bind pyridoxal 5'-phosphate. An N6-(pyridoxal phosphate)lysine modification is found at Lys197. Position 238 to 239 (238 to 239 (NT)) interacts with pyridoxal 5'-phosphate.

The protein belongs to the class-V pyridoxal-phosphate-dependent aminotransferase family. SerC subfamily. In terms of assembly, homodimer. The cofactor is pyridoxal 5'-phosphate.

The protein resides in the cytoplasm. The enzyme catalyses O-phospho-L-serine + 2-oxoglutarate = 3-phosphooxypyruvate + L-glutamate. It carries out the reaction 4-(phosphooxy)-L-threonine + 2-oxoglutarate = (R)-3-hydroxy-2-oxo-4-phosphooxybutanoate + L-glutamate. It participates in amino-acid biosynthesis; L-serine biosynthesis; L-serine from 3-phospho-D-glycerate: step 2/3. Its function is as follows. Catalyzes the reversible conversion of 3-phosphohydroxypyruvate to phosphoserine and of 3-hydroxy-2-oxo-4-phosphonooxybutanoate to phosphohydroxythreonine. This Lysinibacillus sphaericus (strain C3-41) protein is Phosphoserine aminotransferase.